Here is a 121-residue protein sequence, read N- to C-terminus: Large ribosomal subunit protein bL12 (121 aa).

Belongs to the bacterial ribosomal protein bL12 family. Homodimer. Part of the ribosomal stalk of the 50S ribosomal subunit. Forms a multimeric L10(L12)X complex, where L10 forms an elongated spine to which 2 to 4 L12 dimers bind in a sequential fashion. Binds GTP-bound translation factors.

In terms of biological role, forms part of the ribosomal stalk which helps the ribosome interact with GTP-bound translation factors. Is thus essential for accurate translation. The sequence is that of Large ribosomal subunit protein bL12 from Streptococcus suis (strain 98HAH33).